We begin with the raw amino-acid sequence, 475 residues long: MSSLLKPDFNVSKYRLIAQKREANAVEIEAALEVVREFIIKKKLILYGGIAIDYALHLKGSSIYPEGERPDFDMFSPNHVEDAYELADILYEKGFKQVGTVRAIHVQTMRVRTDFVWVADLSYMPPNIFDTIPTLTYKNLKIIHPDYQRAGLHLAFCFPFDNPPREDVFSRFKKDLQRYNLIEKYYPIPVVPVKSTYESKTFSIPFKQVAIHGFAAYALLYQTLNELRITCKVPEWKTEFPQPSYSYHKNDKNITLTIDMPRAYPALVLATYNPEGVIKEMGLHLTEICEPYMDYSPPIFKTNDIHFFSTMFKELAISIIQDNLIVVSPQYLLLYFLYGAFATPADKSLFLFYYNATLWILEKADSLLNIIQKQTSPEEFTRFANTSPFVLTTRVLSCSQERCTFSPAYRISLANDVQQSQLPLPKTHFLSNSLPDISTLPYNYYPGKGKEKPTNFSYEKNLLFNIGGKCTPSAM.

It belongs to the poxviridae poly(A) polymerase catalytic subunit family. Highly divergent.

It is found in the virion. It catalyses the reaction RNA(n) + ATP = RNA(n)-3'-adenine ribonucleotide + diphosphate. Its function is as follows. Polymerase that creates the 3'-poly(A) tail of mRNAs. The protein is Putative poly(A) polymerase catalytic subunit of Ornithodoros (relapsing fever ticks).